The chain runs to 251 residues: Malonyl-[acyl-carrier protein] O-methyltransferase (251 aa).

This sequence belongs to the methyltransferase superfamily.

It catalyses the reaction malonyl-[ACP] + S-adenosyl-L-methionine = malonyl-[ACP] methyl ester + S-adenosyl-L-homocysteine. Its pathway is cofactor biosynthesis; biotin biosynthesis. Functionally, converts the free carboxyl group of a malonyl-thioester to its methyl ester by transfer of a methyl group from S-adenosyl-L-methionine (SAM). It allows to synthesize pimeloyl-ACP via the fatty acid synthetic pathway. This Salmonella typhimurium (strain LT2 / SGSC1412 / ATCC 700720) protein is Malonyl-[acyl-carrier protein] O-methyltransferase.